The primary structure comprises 80 residues: Small membrane A-kinase anchor protein (80 aa).

The N-myristoyl glycine moiety is linked to residue G2.

Belongs to the small membrane AKAP family. May be palmitoylated at Cys-3.

It is found in the cell membrane. Binds to type I regulatory subunits of protein kinase A and may anchor/target them to the plasma membrane. This Tetraodon nigroviridis (Spotted green pufferfish) protein is Small membrane A-kinase anchor protein.